The primary structure comprises 67 residues: SPbeta prophage-derived uncharacterized protein YoqF (67 aa).

This is SPbeta prophage-derived uncharacterized protein YoqF (yoqF) from Bacillus subtilis (strain 168).